The following is a 249-amino-acid chain: MADS-box transcription factor 7 (249 aa).

Residues 1–61 (MGRGRVELKR…GKLYEFCSTQ (61 aa)) enclose the MADS-box domain. The region spanning 90 to 180 (LKASRNEYLK…RRKLEESNHV (91 aa)) is the K-box domain.

In terms of assembly, may interact with the K-box of MADS6. May interact with MADS13 and MADS18. Expressed in lodicules, stamens and carpels.

The protein resides in the nucleus. Probable transcription factor. May be involved in the control of flowering time. This Oryza sativa subsp. japonica (Rice) protein is MADS-box transcription factor 7 (MADS7).